Consider the following 394-residue polypeptide: 1-deoxy-D-xylulose 5-phosphate reductoisomerase (394 aa).

NADPH is bound by residues Thr11, Gly12, Ser13, Ile14, Gly37, Asn39, and Asn126. A 1-deoxy-D-xylulose 5-phosphate-binding site is contributed by Lys127. An NADPH-binding site is contributed by Glu128. A Mn(2+)-binding site is contributed by Asp152. Residues Ser153, Glu154, Ser178, and His201 each coordinate 1-deoxy-D-xylulose 5-phosphate. Residue Glu154 coordinates Mn(2+). Residue Gly207 participates in NADPH binding. The 1-deoxy-D-xylulose 5-phosphate site is built by Ser214, Asn219, Lys220, and Glu223. Residue Glu223 participates in Mn(2+) binding.

The protein belongs to the DXR family. Mg(2+) serves as cofactor. The cofactor is Mn(2+).

It carries out the reaction 2-C-methyl-D-erythritol 4-phosphate + NADP(+) = 1-deoxy-D-xylulose 5-phosphate + NADPH + H(+). It functions in the pathway isoprenoid biosynthesis; isopentenyl diphosphate biosynthesis via DXP pathway; isopentenyl diphosphate from 1-deoxy-D-xylulose 5-phosphate: step 1/6. Catalyzes the NADPH-dependent rearrangement and reduction of 1-deoxy-D-xylulose-5-phosphate (DXP) to 2-C-methyl-D-erythritol 4-phosphate (MEP). The chain is 1-deoxy-D-xylulose 5-phosphate reductoisomerase from Synechocystis sp. (strain ATCC 27184 / PCC 6803 / Kazusa).